A 356-amino-acid chain; its full sequence is Tyrosine recombinase XerS (356 aa).

Residues 16 to 121 (VMPPYVLEYY…ALSSLYKYLT (106 aa)) enclose the Core-binding (CB) domain. The region spanning 169-354 (GFLDYIDSEY…INEEQKNALD (186 aa)) is the Tyr recombinase domain. Residues Arg-210, Lys-234, His-306, Arg-309, and His-332 contribute to the active site. The O-(3'-phospho-DNA)-tyrosine intermediate role is filled by Tyr-341.

This sequence belongs to the 'phage' integrase family. XerS subfamily.

It localises to the cytoplasm. With respect to regulation, ftsK is required for recombination. Its function is as follows. Site-specific tyrosine recombinase, which acts by catalyzing the cutting and rejoining of the recombining DNA molecules. Essential to convert dimers of the bacterial chromosome into monomers to permit their segregation at cell division. The chain is Tyrosine recombinase XerS from Lactococcus lactis subsp. cremoris (strain SK11).